Here is a 637-residue protein sequence, read N- to C-terminus: Chaperone protein DnaK (637 aa).

Thr198 carries the phosphothreonine; by autocatalysis modification. Low complexity predominate over residues 601–615 (AQQKAQAEQAGADAG). Residues 601–637 (AQQKAQAEQAGADAGEQPKQDDDVVDAEFEEVKEDKK) form a disordered region. Acidic residues predominate over residues 623-637 (DVVDAEFEEVKEDKK).

It belongs to the heat shock protein 70 family.

Acts as a chaperone. This Vibrio atlanticus (strain LGP32) (Vibrio splendidus (strain Mel32)) protein is Chaperone protein DnaK.